The primary structure comprises 162 residues: Cytochrome B pre-mRNA-processing protein 6 (162 aa).

At Ser-2 the chain carries N-acetylserine. Residue Thr-97 is modified to Phosphothreonine.

The protein resides in the mitochondrion. This protein is involved in processing of the 5' terminus and the intervening sequences of cytochrome b pre-mRNA. This Saccharomyces cerevisiae (strain ATCC 204508 / S288c) (Baker's yeast) protein is Cytochrome B pre-mRNA-processing protein 6 (CBP6).